We begin with the raw amino-acid sequence, 307 residues long: Porphobilinogen deaminase (307 aa).

C241 carries the post-translational modification S-(dipyrrolylmethanemethyl)cysteine.

The protein belongs to the HMBS family. Monomer. Dipyrromethane serves as cofactor.

The catalysed reaction is 4 porphobilinogen + H2O = hydroxymethylbilane + 4 NH4(+). The protein operates within porphyrin-containing compound metabolism; protoporphyrin-IX biosynthesis; coproporphyrinogen-III from 5-aminolevulinate: step 2/4. In terms of biological role, tetrapolymerization of the monopyrrole PBG into the hydroxymethylbilane pre-uroporphyrinogen in several discrete steps. The chain is Porphobilinogen deaminase from Coxiella burnetii (strain RSA 331 / Henzerling II).